Here is a 282-residue protein sequence, read N- to C-terminus: Glutamyl endopeptidase (282 aa).

The N-terminal stretch at 1-27 is a signal peptide; that stretch reads MKKRFLSICTMTIAALATTTMVNTSYA. The propeptide occupies 28-66; that stretch reads KTDTESHNHSSLGTENKNVLDINSSSHNIKPSQNKSYPS. Residues His117, Asp159, and Ser235 each act as charge relay system in the active site.

This sequence belongs to the peptidase S1B family. As to quaternary structure, monomer.

The protein resides in the secreted. It catalyses the reaction Preferential cleavage: Glu-|-Xaa, Asp-|-Xaa.. With respect to regulation, inhibited by diisopropyl fluorophosphate. Functionally, exhibits a significant hydrolytic activity for the carbonyl side of glutamic acid. Shows activity toward human fibronectin and type 1 collagen. The polypeptide is Glutamyl endopeptidase (gseA) (Staphylococcus epidermidis).